The following is a 153-amino-acid chain: 3-hydroxyacyl-[acyl-carrier-protein] dehydratase FabZ (153 aa).

Residue His-54 is part of the active site.

The protein belongs to the thioester dehydratase family. FabZ subfamily.

The protein localises to the cytoplasm. The enzyme catalyses a (3R)-hydroxyacyl-[ACP] = a (2E)-enoyl-[ACP] + H2O. Involved in unsaturated fatty acids biosynthesis. Catalyzes the dehydration of short chain beta-hydroxyacyl-ACPs and long chain saturated and unsaturated beta-hydroxyacyl-ACPs. This chain is 3-hydroxyacyl-[acyl-carrier-protein] dehydratase FabZ, found in Shewanella denitrificans (strain OS217 / ATCC BAA-1090 / DSM 15013).